We begin with the raw amino-acid sequence, 295 residues long: Fructose-bisphosphate aldolase class 1 (295 aa).

Glutamate 176 functions as the Proton acceptor in the catalytic mechanism. Lysine 213 acts as the Schiff-base intermediate with dihydroxyacetone-P in catalysis.

Belongs to the class I fructose-bisphosphate aldolase family.

It carries out the reaction beta-D-fructose 1,6-bisphosphate = D-glyceraldehyde 3-phosphate + dihydroxyacetone phosphate. It participates in carbohydrate degradation; glycolysis; D-glyceraldehyde 3-phosphate and glycerone phosphate from D-glucose: step 4/4. The polypeptide is Fructose-bisphosphate aldolase class 1 (Treponema denticola (strain ATCC 35405 / DSM 14222 / CIP 103919 / JCM 8153 / KCTC 15104)).